The chain runs to 556 residues: 3-phosphoinositide-dependent protein kinase 1 (556 aa).

Tyrosine 9 carries the post-translational modification Phosphotyrosine; by SRC and INSR. At serine 25 the chain carries Phosphoserine. Positions 26–80 are disordered; that stretch reads PSMVRTQTESSTPPGIPGGSRQGPAMDGTAAEPRPGAGSLQHAQPPPQPRKKRPE. The segment covering 28–38 has biased composition (polar residues); it reads MVRTQTESSTP. The Protein kinase domain occupies 82–342; the sequence is FKFGKILGEG…YGPLKAHPFF (261 aa). Residues 92–94 and lysine 111 each bind ATP; that span reads SFS. A PIF-pocket region spans residues 113-157; sequence LEKRHIIKENKVPYVTRERDVMSRLDHPFFVKLYFTFQDDEKLYF. Residues 160 to 162 and glutamate 166 each bind ATP; that span reads SYA. Aspartate 205 functions as the Proton acceptor in the catalytic mechanism. ATP contacts are provided by glutamate 209 and aspartate 223. The residue at position 241 (serine 241) is a Phosphoserine; by autocatalysis. An N6-acetyllysine modification is found at lysine 304. At threonine 354 the chain carries Phosphothreonine; by MELK. Residues tyrosine 373 and tyrosine 376 each carry the phosphotyrosine; by SRC and INSR modification. Serine 393 is subject to Phosphoserine. A Phosphoserine; by MAP3K5 modification is found at serine 394. Serine 396 carries the post-translational modification Phosphoserine. Position 398 is a phosphoserine; by MAP3K5 (serine 398). At serine 410 the chain carries Phosphoserine. Residues 459 to 550 form the PH domain; the sequence is KMGPVDKRKG…EVWRQRYQSH (92 aa). Serine 501 bears the Phosphoserine; by PKC/PRKCQ mark. Residue threonine 513 is modified to Phosphothreonine; by autocatalysis. Serine 529 carries the post-translational modification Phosphoserine; by PKC/PRKCQ.

The protein belongs to the protein kinase superfamily. AGC Ser/Thr protein kinase family. PDPK1 subfamily. In terms of assembly, homodimer in its autoinhibited state. Active as monomer. Interacts with NPRL2, PPARG, PAK1, PTK2B, GRB14, PKN1 (via C-terminus), STRAP and IKKB. The Tyr-9 phosphorylated form interacts with SRC, RASA1 and CRK (via their SH2 domains). Interacts with SGK3 in a phosphorylation-dependent manner. The tyrosine-phosphorylated form interacts with PTPN6. The Ser-241 phosphorylated form interacts with YWHAH and YWHAQ. Binds INSR in response to insulin. Interacts (via PH domain) with SMAD3, SMAD4 and SMAD7. Interacts with PKN2; the interaction stimulates PDPK1 autophosphorylation, its PI(3,4,5)P3-dependent kinase activity toward 'Ser-473' of AKT1 but also activates its kinase activity toward PRKCD and PRKCZ. Post-translationally, phosphorylation on Ser-241 in the activation loop is required for full activity. PDPK1 itself can autophosphorylate Ser-241, leading to its own activation. Autophosphorylation is inhibited by the apoptotic C-terminus cleavage product of PKN2. Tyr-9 phosphorylation is critical for stabilization of both PDPK1 and the PDPK1/SRC complex via HSP90-mediated protection of PDPK1 degradation. Angiotensin II stimulates the tyrosine phosphorylation of PDPK1 in vascular smooth muscle in a calcium- and SRC-dependent manner. Phosphorylated on Tyr-9, Tyr-373 and Tyr-376 by INSR in response to insulin. Palmitate negatively regulates autophosphorylation at Ser-241 and palmitate-induced phosphorylation at Ser-529 and Ser-501 by PKC/PRKCQ negatively regulates its ability to phosphorylate PKB/AKT1. Phosphorylation at Thr-354 by MELK partially inhibits kinase activity, the inhibition is cooperatively enhanced by phosphorylation at Ser-394 and Ser-398 by MAP3K5. In terms of processing, autophosphorylated; autophosphorylation is inhibited by the apoptotic C-terminus cleavage product of PKN2. Monoubiquitinated in the kinase domain, deubiquitinated by USP4. As to expression, appears to be expressed ubiquitously. The Tyr-9 phosphorylated form is markedly increased in diseased tissue compared with normal tissue from lung, liver, colon and breast.

The protein localises to the cytoplasm. It is found in the nucleus. Its subcellular location is the cell membrane. It localises to the cell junction. The protein resides in the focal adhesion. The catalysed reaction is L-seryl-[protein] + ATP = O-phospho-L-seryl-[protein] + ADP + H(+). It carries out the reaction L-threonyl-[protein] + ATP = O-phospho-L-threonyl-[protein] + ADP + H(+). Its activity is regulated as follows. Homodimerization regulates its activity by maintaining the kinase in an autoinhibitory conformation. NPRL2 down-regulates its activity by interfering with tyrosine phosphorylation at the Tyr-9, Tyr-373 and Tyr-376 residues. The 14-3-3 protein YWHAQ acts as a negative regulator by association with the residues surrounding the Ser-241 residue. STRAP positively regulates its activity by enhancing its autophosphorylation and by stimulating its dissociation from YWHAQ. SMAD2, SMAD3, SMAD4 and SMAD7 also positively regulate its activity by stimulating its dissociation from YWHAQ. Activated by phosphorylation on Tyr-9, Tyr-373 and Tyr-376 by INSR in response to insulin. Serine/threonine kinase which acts as a master kinase, phosphorylating and activating a subgroup of the AGC family of protein kinases. Its targets include: protein kinase B (PKB/AKT1, PKB/AKT2, PKB/AKT3), p70 ribosomal protein S6 kinase (RPS6KB1), p90 ribosomal protein S6 kinase (RPS6KA1, RPS6KA2 and RPS6KA3), cyclic AMP-dependent protein kinase (PRKACA), protein kinase C (PRKCD and PRKCZ), serum and glucocorticoid-inducible kinase (SGK1, SGK2 and SGK3), p21-activated kinase-1 (PAK1), TSSK3, protein kinase PKN (PKN1 and PKN2). Plays a central role in the transduction of signals from insulin by providing the activating phosphorylation to PKB/AKT1, thus propagating the signal to downstream targets controlling cell proliferation and survival, as well as glucose and amino acid uptake and storage. Negatively regulates the TGF-beta-induced signaling by: modulating the association of SMAD3 and SMAD7 with TGF-beta receptor, phosphorylating SMAD2, SMAD3, SMAD4 and SMAD7, preventing the nuclear translocation of SMAD3 and SMAD4 and the translocation of SMAD7 from the nucleus to the cytoplasm in response to TGF-beta. Activates PPARG transcriptional activity and promotes adipocyte differentiation. Activates the NF-kappa-B pathway via phosphorylation of IKKB. The tyrosine phosphorylated form is crucial for the regulation of focal adhesions by angiotensin II. Controls proliferation, survival, and growth of developing pancreatic cells. Participates in the regulation of Ca(2+) entry and Ca(2+)-activated K(+) channels of mast cells. Essential for the motility of vascular endothelial cells (ECs) and is involved in the regulation of their chemotaxis. Plays a critical role in cardiac homeostasis by serving as a dual effector for cell survival and beta-adrenergic response. Plays an important role during thymocyte development by regulating the expression of key nutrient receptors on the surface of pre-T cells and mediating Notch-induced cell growth and proliferative responses. Provides negative feedback inhibition to toll-like receptor-mediated NF-kappa-B activation in macrophages. Functionally, catalytically inactive. This is 3-phosphoinositide-dependent protein kinase 1 (PDPK1) from Homo sapiens (Human).